The chain runs to 204 residues: Nicotine blue oxidoreductase (204 aa).

In terms of assembly, homotetramer. FMN is required as a cofactor.

The enzyme catalyses 3,3'-bipyridine-2,2',5,5',6,6'-hexol + NADP(+) = (E)-2,2',5,5'-tetrahydroxy-6H,6'H-(3,3'-bipyridinylidene)-6,6'-dione + NADPH + 3 H(+). The catalysed reaction is 3,3'-bipyridine-2,2',5,5',6,6'-hexol + NAD(+) = (E)-2,2',5,5'-tetrahydroxy-6H,6'H-(3,3'-bipyridinylidene)-6,6'-dione + NADH + 3 H(+). It functions in the pathway alkaloid degradation; nicotine degradation. In terms of biological role, catalyzes the reduction of nicotine blue to its hydroquinone form. Nicotine blue is the name given to the compound formed by the autocatalytic condensation of two molecules of 2,3,6-trihydroxypyridine, an intermediate in the nicotine degradation pathway. May play a role in preventing the intracellular formation of nicotine blue semiquinone radicals, which by redox cycling would lead to the formation of toxic reactive oxygen species. Besides nicotine blue, several other quinones are reduced by nboR. The protein is Nicotine blue oxidoreductase (nboR) of Paenarthrobacter nicotinovorans (Arthrobacter nicotinovorans).